Here is a 352-residue protein sequence, read N- to C-terminus: Keratocan (352 aa).

The signal sequence occupies residues 1–20; that stretch reads MASTICFILWVVFVTDTVWT. In terms of domain architecture, LRRNT spans 33–71; the sequence is EDWTMHDFDCPRECFCPPSFPTALYCENRGLKEIPAIPS. Intrachain disulfides connect C42-C48 and C46-C58. LRR repeat units follow at residues 72 to 93, 96 to 117, 122 to 142, 143 to 164, 167 to 180, 193 to 214, 215 to 235, and 238 to 258; these read RIWYLYLENNLIETIPEKPFEN, QLRWINLNKNKITNYGIEKGAL, KLLFLFLEDNELEEVPSPLPR, SLEQLQLARNKVSRIPQGTFSN, NLTLLDLQHNKLLD, NLMQLNMAKNALRNMPPRLPAN, TMQVFLDNNSIEGIPENYFNV, and KVAFLRLNHNKLSDAGLPSSG. N-linked (GlcNAc...) (keratan sulfate) asparagine glycosylation is present at N93. N-linked (GlcNAc...) (keratan sulfate) asparagine glycosylation is present at N167. The N-linked (GlcNAc...) asparagine glycan is linked to N222. N-linked (GlcNAc...) (keratan sulfate) asparagine glycosylation occurs at N260. LRR repeat units lie at residues 263-282 and 283-304; these read SILDLQLSHNQLTKVPKISA and HLQHLHLDHNKIRNVNVSVICP. N298 carries an N-linked (GlcNAc...) asparagine glycan. C303 and C343 are oxidised to a cystine.

The protein belongs to the small leucine-rich proteoglycan (SLRP) family. SLRP class II subfamily. Binds three long, highly sulfated keratan sulfate chains in the cornea but short, non-sulfated poly(N-acetyllactosamine) chains in other tissues. In terms of processing, the N-terminus is blocked. In terms of tissue distribution, abundant in cornea and sclera but also found in other tissues.

The protein resides in the secreted. It localises to the extracellular space. It is found in the extracellular matrix. Its function is as follows. May be important in developing and maintaining corneal transparency and for the structure of the stromal matrix. The polypeptide is Keratocan (KERA) (Bos taurus (Bovine)).